We begin with the raw amino-acid sequence, 483 residues long: Matrix metalloproteinase-20 (483 aa).

Positions 1–22 (MKVLPASGLAVFLIMALKFSTA) are cleaved as a signal peptide. Positions 23–107 (APSLVAASPR…PRCGVPDVAN (85 aa)) are excised as a propeptide. A Cysteine switch motif is present at residues 98 to 105 (PRCGVPDV). A Zn(2+)-binding site is contributed by Cys-100. The Ca(2+) site is built by Glu-164, Ala-165, and Asp-166. His-176 and Asp-178 together coordinate Zn(2+). Positions 183, 184, 186, and 188 each coordinate Ca(2+). Zn(2+) is bound at residue His-191. Residues Glu-197, Gly-198, Gly-200, and Asp-202 each contribute to the Ca(2+) site. His-204 contributes to the Zn(2+) binding site. The Ca(2+) site is built by Asp-206 and Glu-209. Residue His-226 coordinates Zn(2+). Residue Glu-227 is part of the active site. Zn(2+) contacts are provided by His-230 and His-236. 4 Hemopexin repeats span residues 293 to 343 (PDLC…FPQL), 344 to 389 (MSNV…GFPR), 391 to 439 (VQQI…FSGV), and 440 to 483 (NGQI…WIGC). Residues Cys-296 and Cys-483 are joined by a disulfide bond.

This sequence belongs to the peptidase M10A family. Zn(2+) serves as cofactor. Requires Ca(2+) as cofactor. Autoactivates at least at the 107-Asn-|-Tyr-108 site. In terms of tissue distribution, expressed specifically in the enamel organ.

It localises to the secreted. The protein localises to the extracellular space. It is found in the extracellular matrix. Degrades amelogenin, the major protein component of the enamel matrix and two of the macromolecules characterizing the cartilage extracellular matrix: aggrecan and the cartilage oligomeric matrix protein (COMP). May play a central role in tooth enamel formation. Cleaves aggrecan at the '360-Asn-|-Phe-361' site. In Homo sapiens (Human), this protein is Matrix metalloproteinase-20 (MMP20).